A 561-amino-acid chain; its full sequence is Shugoshin 1 (561 aa).

The tract at residues 1–176 is necessary for interaction with PPP2CA and PPP2R1A; it reads MAKERCLKKS…DTLGVDFDSG (176 aa). The stretch at 7–89 forms a coiled coil; that stretch reads LKKSFQDSLE…DIILQLRKEC (83 aa). Residue Ser14 is modified to Phosphoserine; by NEK2. The D-box 1 signature appears at 192–200; sequence RSSLKKHCN. Residue Ser256 is modified to Phosphoserine. Disordered stretches follow at residues 260–331 and 348–441; these read IQPG…SVSS and FRQK…HLSL. Residues 267–296 show a composition bias toward basic and acidic residues; it reads KTKEDILESKSEQTKSKQRDTQERKREEKR. The stretch at 273–313 forms a coiled coil; sequence LESKSEQTKSKQRDTQERKREEKRKANRRKSKRMSKYKENK. A compositionally biased stretch (basic residues) spans 297–307; that stretch reads KANRRKSKRMS. Residues 308–318 show a composition bias toward basic and acidic residues; sequence KYKENKSENKK. The short motif at 310–312 is the KEN box element; it reads KEN. Residues 364-375 show a composition bias toward low complexity; that stretch reads SEVSLCESSGSG. Residues 388–398 show a composition bias toward polar residues; that stretch reads YIQNPTSNSDR. Basic and acidic residues predominate over residues 410 to 421; sequence KYTDEKETEGSK. The span at 422 to 433 shows a compositional bias: low complexity; it reads PTKTPTTTPPET. Ser436 is modified (phosphoserine). The short motif at 438-446 is the D-box 2 element; sequence HLSLKDITN. Positions 451 to 455 match the PXVXL/I motif motif; that stretch reads PVVKI. A D-box 3 motif is present at residues 457–465; that stretch reads RLSLSPKKN. Residue Ser507 is modified to Phosphoserine; by NEK2.

The protein belongs to the shugoshin family. Interacts with PPP2CA (or PPP2CB), PPP2R1B, PPP2R5A, PPP2R5B, PPP2R5C, PPP2R5D, PPP2R5E, SET, LRRC59, RBM10 (or RBM5), RPL10A, RPL28, RPL7, RPL7A and RPLP1. Interaction with protein phosphatase 2A occurs most probably through direct binding to the regulatory B56 subunits: PPP2R1B, PPP2R5A, PPP2R5B, PPP2R5C, PPP2R5D, PPP2R5E. Interacts with PPP2R1A and NEK2. Isoform 3 interacts with PLK1. Interacts with CDCA8. Ubiquitinated and degraded during mitotic exit by APC/C-Cdh1. In terms of processing, phosphorylation by NEK2 is essential for chromosome congression in mitosis and for the proper attachment of spindle microtubule to the kinetochore. Phosphorylated by PLK1 and AUKRB. As to expression, widely expressed. Highly expressed in testis. Expressed in lung, small intestine, breast, liver and placenta. Strongly overexpressed in 90% of breast cancers tested.

Its subcellular location is the nucleus. The protein resides in the chromosome. The protein localises to the centromere. It is found in the kinetochore. It localises to the cytoplasm. Its subcellular location is the cytoskeleton. The protein resides in the spindle pole. The protein localises to the microtubule organizing center. It is found in the centrosome. It localises to the nucleus speckle. Its function is as follows. Plays a central role in chromosome cohesion during mitosis by preventing premature dissociation of cohesin complex from centromeres after prophase, when most of cohesin complex dissociates from chromosomes arms. May act by preventing phosphorylation of the STAG2 subunit of cohesin complex at the centromere, ensuring cohesin persistence at centromere until cohesin cleavage by ESPL1/separase at anaphase. Essential for proper chromosome segregation during mitosis and this function requires interaction with PPP2R1A. Its phosphorylated form is necessary for chromosome congression and for the proper attachment of spindle microtubule to the kinetochore. Necessary for kinetochore localization of PLK1 and CENPF. May play a role in the tension sensing mechanism of the spindle-assembly checkpoint by regulating PLK1 kinetochore affinity. Isoform 3 plays a role in maintaining centriole cohesion involved in controlling spindle pole integrity. Involved in centromeric enrichment of AUKRB in prometaphase. This is Shugoshin 1 from Homo sapiens (Human).